Consider the following 393-residue polypeptide: Pyrimidine monooxygenase RutA (393 aa).

FMN is bound by residues 79-80, asparagine 145, glutamate 154, 170-171, and serine 220; these read IK and RY.

Belongs to the NtaA/SnaA/DszA monooxygenase family. RutA subfamily.

It catalyses the reaction uracil + FMNH2 + NADH + O2 = (Z)-3-ureidoacrylate + FMN + NAD(+) + H2O + H(+). It carries out the reaction thymine + FMNH2 + NADH + O2 = (Z)-2-methylureidoacrylate + FMN + NAD(+) + H2O + H(+). Catalyzes the pyrimidine ring opening between N-3 and C-4 by an unusual flavin hydroperoxide-catalyzed mechanism, adding oxygen atoms in the process to yield ureidoacrylate peracid, that immediately reacts with FMN forming ureidoacrylate and FMN-N(5)-oxide. The FMN-N(5)-oxide reacts spontaneously with NADH to produce FMN. Requires the flavin reductase RutF to regenerate FMN in vivo. The protein is Pyrimidine monooxygenase RutA of Escherichia coli O9:H4 (strain HS).